Consider the following 257-residue polypeptide: Imidazole glycerol phosphate synthase subunit HisF (257 aa).

Active-site residues include D12 and D131.

This sequence belongs to the HisA/HisF family. In terms of assembly, heterodimer of HisH and HisF.

The protein localises to the cytoplasm. It catalyses the reaction 5-[(5-phospho-1-deoxy-D-ribulos-1-ylimino)methylamino]-1-(5-phospho-beta-D-ribosyl)imidazole-4-carboxamide + L-glutamine = D-erythro-1-(imidazol-4-yl)glycerol 3-phosphate + 5-amino-1-(5-phospho-beta-D-ribosyl)imidazole-4-carboxamide + L-glutamate + H(+). The protein operates within amino-acid biosynthesis; L-histidine biosynthesis; L-histidine from 5-phospho-alpha-D-ribose 1-diphosphate: step 5/9. IGPS catalyzes the conversion of PRFAR and glutamine to IGP, AICAR and glutamate. The HisF subunit catalyzes the cyclization activity that produces IGP and AICAR from PRFAR using the ammonia provided by the HisH subunit. The chain is Imidazole glycerol phosphate synthase subunit HisF from Cellvibrio japonicus (strain Ueda107) (Pseudomonas fluorescens subsp. cellulosa).